The chain runs to 211 residues: Bcl-2 homologous antagonist/killer (211 aa).

Positions 1-28 (MASGQGPGPPRQECGEPALPSASEEQVA) are disordered. A2 carries the post-translational modification N-acetylalanine. The BH3 motif lies at 74–88 (VGRQLAIIGDDINRR). The BH1 signature appears at 117 to 136 (SLFESGINWGRVVALLGFGY). Zn(2+)-binding residues include D160 and H164. The BH2 signature appears at 169 to 184 (RWIAQRGGWVAALNLG). Residues 188 to 205 (ILNVLVVLGVVLLGQFVV) form a helical membrane-spanning segment.

Belongs to the Bcl-2 family. As to quaternary structure, homodimer. Formation of the homodimer is zinc-dependent. Forms heterodimers with BCL2 and BCL2L1 isoform Bcl-X(L). Forms heterooligomers with BAX. Interacts with BCL2A1. Interacts with RTL10/BOP. Interacts with VDAC1. Interacts with GIMAP3/IAN4 and GIMAP5/IAN5. In terms of assembly, (Microbial infection) Interacts with vaccinia virus protein F1. (Microbial infection) Interacts with myxoma virus protein M11L. As to quaternary structure, (Microbial infection) Interacts with Epstein-Barr virus protein BALF1. In terms of assembly, (Microbial infection) Interacts with adenovirus protein E1B 19K. As to expression, expressed in a wide variety of tissues, with highest levels in the heart and skeletal muscle.

The protein resides in the mitochondrion outer membrane. In terms of biological role, plays a role in the mitochondrial apoptotic process. Upon arrival of cell death signals, promotes mitochondrial outer membrane (MOM) permeabilization by oligomerizing to form pores within the MOM. This releases apoptogenic factors into the cytosol, including cytochrome c, promoting the activation of caspase 9 which in turn processes and activates the effector caspases. The protein is Bcl-2 homologous antagonist/killer (BAK1) of Homo sapiens (Human).